The chain runs to 641 residues: Sodium-dependent nutrient amino acid transporter 1 (641 aa).

Residues Met-1–Ala-34 are disordered. The Cytoplasmic portion of the chain corresponds to Met-1–Asn-38. Over residues Ser-9–Thr-24 the composition is skewed to low complexity. Over residues Glu-25 to Ala-34 the composition is skewed to basic and acidic residues. 3 helical membrane-spanning segments follow: residues Trp-39–Val-59, Gly-72–Leu-92, and Ser-109–Ile-129. N-linked (GlcNAc...) asparagine glycans are attached at residues Asn-183 and Asn-188. The next 9 helical transmembrane spans lie at Pro-229 to Met-249, Ala-258 to Val-278, Ala-307 to Ser-327, Ile-341 to Leu-361, Leu-401 to Leu-421, Val-441 to Gly-461, Thr-474 to Leu-494, Cys-516 to Ile-536, and Ile-552 to Tyr-572.

This sequence belongs to the sodium:neurotransmitter symporter (SNF) (TC 2.A.22) family.

It is found in the membrane. Unusual broad substrate spectrum amino acid:sodium cotransporter that promotes absorption of the D isomers of essential amino acids. Neutral amino acids are the preferred substrates, especially methionine and phenylalanine. The polypeptide is Sodium-dependent nutrient amino acid transporter 1 (Drosophila yakuba (Fruit fly)).